We begin with the raw amino-acid sequence, 465 residues long: UDP-N-acetylmuramate--L-alanine ligase (465 aa).

An ATP-binding site is contributed by 115-121 (GAHGKTT).

It belongs to the MurCDEF family.

The protein resides in the cytoplasm. The enzyme catalyses UDP-N-acetyl-alpha-D-muramate + L-alanine + ATP = UDP-N-acetyl-alpha-D-muramoyl-L-alanine + ADP + phosphate + H(+). The protein operates within cell wall biogenesis; peptidoglycan biosynthesis. Its function is as follows. Cell wall formation. The polypeptide is UDP-N-acetylmuramate--L-alanine ligase (Coxiella burnetii (strain CbuG_Q212) (Coxiella burnetii (strain Q212))).